An 861-amino-acid polypeptide reads, in one-letter code: DNA mismatch repair protein MutS (861 aa).

616–623 (GPNMGGKS) is a binding site for ATP.

It belongs to the DNA mismatch repair MutS family.

In terms of biological role, this protein is involved in the repair of mismatches in DNA. It is possible that it carries out the mismatch recognition step. This protein has a weak ATPase activity. The chain is DNA mismatch repair protein MutS from Haemophilus influenzae (strain 86-028NP).